A 250-amino-acid polypeptide reads, in one-letter code: Kv channel-interacting protein 4 (250 aa).

The segment at 2–44 is KIS; sequence NVRRVESISAQLEEASSTGGFLYAQNNTKRSIKERLMKLLPCS. 2 positions are modified to phosphoserine: Ser-17 and Ser-56. One can recognise an EF-hand 1; degenerate domain in the interval 61-117; the sequence is LEMATVRHRPEALELLEAQSKFTKKELQILYRGFKNECPSGVVNEETFKEIYSQFFP. EF-hand domains follow at residues 120-155, 156-191, and 204-239; these read DSTT…LLRG, TVQE…IYDM, and APRQ…DENI. Ca(2+) contacts are provided by Asp-133, Asp-135, Asn-137, Asp-144, Asp-169, Asn-171, Asp-173, Tyr-175, Glu-180, Asp-217, Asn-219, Asp-221, and Glu-228. An interaction with KCND2 region spans residues 237–250; that stretch reads ENIMRSMQLFENVI.

The protein belongs to the recoverin family. As to quaternary structure, component of heteromultimeric potassium channels. Identified in potassium channel complexes containing KCND1, KCND2, KCND3, KCNIP1, KCNIP2, KCNIP3, KCNIP4, DPP6 and DPP10. Interacts with the C-terminus of PSEN2 and probably PSEN1. Interacts with KCND2 and KCND3. Expressed in brain. Highly expressed by neurons in layers II-IV of cortex and in hippocampus, thalamus and the Purkinje cell layer of the cerebellum.

Its subcellular location is the cell membrane. The protein resides in the cytoplasm. It localises to the peroxisome. Its function is as follows. Regulatory subunit of Kv4/D (Shal)-type voltage-gated rapidly inactivating A-type potassium channels, such as KCND2/Kv4.2 and KCND3/Kv4.3. Modulates channel expression at the cell membrane, gating characteristics, inactivation kinetics and rate of recovery from inactivation in a calcium-dependent and isoform-specific manner. The chain is Kv channel-interacting protein 4 (Kcnip4) from Mus musculus (Mouse).